The primary structure comprises 600 residues: Elongation factor 4 (600 aa).

A tr-type G domain is found at 13–194 (DRIRNFCIIA…AIVERIPPPR (182 aa)). Residues 25–30 (DHGKST) and 141–144 (NKID) each bind GTP.

Belongs to the TRAFAC class translation factor GTPase superfamily. Classic translation factor GTPase family. LepA subfamily.

The protein resides in the cell membrane. The enzyme catalyses GTP + H2O = GDP + phosphate + H(+). In terms of biological role, required for accurate and efficient protein synthesis under certain stress conditions. May act as a fidelity factor of the translation reaction, by catalyzing a one-codon backward translocation of tRNAs on improperly translocated ribosomes. Back-translocation proceeds from a post-translocation (POST) complex to a pre-translocation (PRE) complex, thus giving elongation factor G a second chance to translocate the tRNAs correctly. Binds to ribosomes in a GTP-dependent manner. The protein is Elongation factor 4 of Rubrobacter xylanophilus (strain DSM 9941 / JCM 11954 / NBRC 16129 / PRD-1).